Consider the following 783-residue polypeptide: Endonuclease MutS2 (783 aa).

ATP is bound at residue 328-335 (GPNTGGKT). Positions 708–783 (LDLRGKRYEE…GSGCTIATLG (76 aa)) constitute a Smr domain.

It belongs to the DNA mismatch repair MutS family. MutS2 subfamily. In terms of assembly, homodimer. Binds to stalled ribosomes, contacting rRNA.

Functionally, endonuclease that is involved in the suppression of homologous recombination and thus may have a key role in the control of bacterial genetic diversity. Its function is as follows. Acts as a ribosome collision sensor, splitting the ribosome into its 2 subunits. Detects stalled/collided 70S ribosomes which it binds and splits by an ATP-hydrolysis driven conformational change. Acts upstream of the ribosome quality control system (RQC), a ribosome-associated complex that mediates the extraction of incompletely synthesized nascent chains from stalled ribosomes and their subsequent degradation. Probably generates substrates for RQC. In Streptococcus thermophilus (strain CNRZ 1066), this protein is Endonuclease MutS2.